A 95-amino-acid chain; its full sequence is Co-chaperonin GroES (95 aa).

Belongs to the GroES chaperonin family. In terms of assembly, heptamer of 7 subunits arranged in a ring. Interacts with the chaperonin GroEL.

It localises to the cytoplasm. Together with the chaperonin GroEL, plays an essential role in assisting protein folding. The GroEL-GroES system forms a nano-cage that allows encapsulation of the non-native substrate proteins and provides a physical environment optimized to promote and accelerate protein folding. GroES binds to the apical surface of the GroEL ring, thereby capping the opening of the GroEL channel. The protein is Co-chaperonin GroES of Rickettsia rickettsii (strain Sheila Smith).